A 469-amino-acid chain; its full sequence is Coumaroyl-CoA:anthocyanidin 3-O-glucoside-6''-O-coumaroyltransferase 1 (469 aa).

M1 is modified (N-acetylmethionine). Active-site proton acceptor residues include H173 and D410.

The protein belongs to the plant acyltransferase family. In terms of tissue distribution, highly expressed in flowers, leaves and roots. Lower levels of expression in stems and siliques.

Involved in the acylation of the 6'' position of the 3-O-glucose residue of anthocyanin. Also able to use flavonol 3-glucosides as the acyl acceptor. This is Coumaroyl-CoA:anthocyanidin 3-O-glucoside-6''-O-coumaroyltransferase 1 (3AT1) from Arabidopsis thaliana (Mouse-ear cress).